A 265-amino-acid polypeptide reads, in one-letter code: Adenosylcobinamide-GDP ribazoletransferase (265 aa).

Transmembrane regions (helical) follow at residues 59 to 79, 113 to 133, 141 to 161, 183 to 203, and 206 to 226; these read LSWILPIEISIILGMILSVLI, IGTFGSIGLILSLGLKYLLLV, WIFLFTSWFSHSASRWFALLL, LPPFDFALSTFFGCFPAVYFL, and FQNQIPNVLLGFFLSSIFVFY.

The protein belongs to the CobS family. Mg(2+) serves as cofactor.

The protein resides in the cell inner membrane. The enzyme catalyses alpha-ribazole + adenosylcob(III)inamide-GDP = adenosylcob(III)alamin + GMP + H(+). The catalysed reaction is alpha-ribazole 5'-phosphate + adenosylcob(III)inamide-GDP = adenosylcob(III)alamin 5'-phosphate + GMP + H(+). It participates in cofactor biosynthesis; adenosylcobalamin biosynthesis; adenosylcobalamin from cob(II)yrinate a,c-diamide: step 7/7. Its function is as follows. Joins adenosylcobinamide-GDP and alpha-ribazole to generate adenosylcobalamin (Ado-cobalamin). Also synthesizes adenosylcobalamin 5'-phosphate from adenosylcobinamide-GDP and alpha-ribazole 5'-phosphate. This is Adenosylcobinamide-GDP ribazoletransferase from Leptospira interrogans serogroup Icterohaemorrhagiae serovar copenhageni (strain Fiocruz L1-130).